Consider the following 129-residue polypeptide: Cytochrome c3 (129 aa).

A signal peptide spans Met-1–Ala-22. Positions 44, 47, 52, 55, 56, 57, 68, 73, 74, 92, 101, 104, 105, 122, 127, and 128 each coordinate heme c.

In terms of processing, binds 4 heme c groups per subunit.

Its subcellular location is the periplasm. Participates in sulfate respiration coupled with phosphorylation by transferring electrons from the enzyme dehydrogenase to ferredoxin. The protein is Cytochrome c3 of Nitratidesulfovibrio vulgaris (strain ATCC 29579 / DSM 644 / CCUG 34227 / NCIMB 8303 / VKM B-1760 / Hildenborough) (Desulfovibrio vulgaris).